A 299-amino-acid chain; its full sequence is Probable lipid kinase YegS (299 aa).

In terms of domain architecture, DAGKc spans 2–133 (ADLPASLLIL…IDIAQVNKET (132 aa)). Residues Thr40, 66–72 (GDGTINE), and Thr95 contribute to the ATP site. Mg(2+) is bound by residues Leu215, Asp218, and Leu220. Glu271 functions as the Proton acceptor in the catalytic mechanism.

Belongs to the diacylglycerol/lipid kinase family. YegS lipid kinase subfamily. The cofactor is Mg(2+). Ca(2+) serves as cofactor.

It localises to the cytoplasm. In terms of biological role, probably phosphorylates lipids; the in vivo substrate is unknown. The protein is Probable lipid kinase YegS of Escherichia fergusonii (strain ATCC 35469 / DSM 13698 / CCUG 18766 / IAM 14443 / JCM 21226 / LMG 7866 / NBRC 102419 / NCTC 12128 / CDC 0568-73).